Consider the following 66-residue polypeptide: Large ribosomal subunit protein bL31 (66 aa).

Zn(2+)-binding residues include cysteine 16, cysteine 18, cysteine 36, and cysteine 39.

The protein belongs to the bacterial ribosomal protein bL31 family. Type A subfamily. As to quaternary structure, part of the 50S ribosomal subunit. It depends on Zn(2+) as a cofactor.

Functionally, binds the 23S rRNA. The sequence is that of Large ribosomal subunit protein bL31 from Pelobacter propionicus (strain DSM 2379 / NBRC 103807 / OttBd1).